The primary structure comprises 558 residues: D-xylose-proton symporter-like 3, chloroplastic (558 aa).

A chloroplast-targeting transit peptide spans 1-31 (MAFAVSVQSHFAIRALKRDHFKNPSPRTFCS). Helical transmembrane passes span 98-118 (VILP…DIGA), 146-166 (LVVS…YGVA), 175-195 (LIIA…APDL), 197-217 (ILLV…HGAP), 238-258 (LFIV…IDVV), 264-284 (MYGF…SLPA), 359-379 (ALTI…PSVL), 400-420 (VSVI…AKVD), 426-446 (PLLI…SAYY), 449-469 (LGGF…CYQI), 491-511 (GISL…FAFS), and 522-542 (LFLL…LVVP).

It belongs to the major facilitator superfamily. Sugar transporter (TC 2.A.1.1) family.

It localises to the plastid. The protein localises to the chloroplast membrane. The polypeptide is D-xylose-proton symporter-like 3, chloroplastic (Arabidopsis thaliana (Mouse-ear cress)).